The following is a 359-amino-acid chain: Phospho-N-acetylmuramoyl-pentapeptide-transferase (359 aa).

A run of 10 helical transmembrane segments spans residues 21–41, 73–93, 98–118, 143–163, 166–186, 202–222, 237–257, 261–281, 286–306, and 336–356; these read YITF…FLLG, TMGG…WADL, IWVT…DDYL, GICL…VPFF, VAPD…VGTS, PLVI…NAII, VTVF…FNAY, IFMG…VAII, ILLT…IFQV, and KIIV…VSTL.

It belongs to the glycosyltransferase 4 family. MraY subfamily. Mg(2+) serves as cofactor.

It is found in the cell inner membrane. It carries out the reaction UDP-N-acetyl-alpha-D-muramoyl-L-alanyl-gamma-D-glutamyl-meso-2,6-diaminopimeloyl-D-alanyl-D-alanine + di-trans,octa-cis-undecaprenyl phosphate = di-trans,octa-cis-undecaprenyl diphospho-N-acetyl-alpha-D-muramoyl-L-alanyl-D-glutamyl-meso-2,6-diaminopimeloyl-D-alanyl-D-alanine + UMP. Its pathway is cell wall biogenesis; peptidoglycan biosynthesis. Catalyzes the initial step of the lipid cycle reactions in the biosynthesis of the cell wall peptidoglycan: transfers peptidoglycan precursor phospho-MurNAc-pentapeptide from UDP-MurNAc-pentapeptide onto the lipid carrier undecaprenyl phosphate, yielding undecaprenyl-pyrophosphoryl-MurNAc-pentapeptide, known as lipid I. This Desulfosudis oleivorans (strain DSM 6200 / JCM 39069 / Hxd3) (Desulfococcus oleovorans) protein is Phospho-N-acetylmuramoyl-pentapeptide-transferase.